Reading from the N-terminus, the 709-residue chain is Twinkle homolog protein, chloroplastic/mitochondrial (709 aa).

Residues 1-16 constitute a chloroplast and mitochondrion transit peptide; sequence MRFLLRLPQIHFRKLS. The 106-residue stretch at 280 to 385 folds into the Toprim domain; that stretch reads SEVIIVEGEI…KKSEDEHFKD (106 aa). Mg(2+)-binding residues include glutamate 286, aspartate 348, and aspartate 350. An SF4 helicase domain is found at 430–698; that stretch reads THGHEYGVST…GSYSDSPVTP (269 aa). 460–467 lines the ATP pocket; the sequence is GIPNSGKS.

The cofactor is Mg(2+). In terms of tissue distribution, expressed in young leaves and shoot apex tissues. Detected in developing tissues such as cotyledons, sepals, pistils and inflorescences. Nearly undetectable in mature leaves.

It is found in the plastid. The protein resides in the chloroplast. It localises to the mitochondrion. The enzyme catalyses ATP + H2O = ADP + phosphate + H(+). Has both DNA primase and DNA helicase activities and may be involved in organelle DNA replication. Capable of producing RNA primers of 9 to 18 bases from a single-stranded DNA template. In Arabidopsis thaliana (Mouse-ear cress), this protein is Twinkle homolog protein, chloroplastic/mitochondrial.